The primary structure comprises 53 residues: Abaecin (53 aa).

An N-terminal signal peptide occupies residues 1–19; the sequence is MKVVIFIFALLATICAAFA.

The protein resides in the secreted. Its function is as follows. This peptide has bactericidal activity. This Apis mellifera (Honeybee) protein is Abaecin.